Here is a 658-residue protein sequence, read N- to C-terminus: Aspartate--tRNA ligase, mitochondrial (658 aa).

Glu-198 contributes to the L-aspartate binding site. Residues 226-229 (QQYK) form an aspartate region. Arg-248 is an L-aspartate binding site. ATP is bound by residues 248-250 (RDE) and Glu-553. Arg-560 provides a ligand contact to L-aspartate. 604 to 607 (GFDR) contributes to the ATP binding site.

This sequence belongs to the class-II aminoacyl-tRNA synthetase family. Type 1 subfamily.

The protein resides in the mitochondrion matrix. It carries out the reaction tRNA(Asp) + L-aspartate + ATP = L-aspartyl-tRNA(Asp) + AMP + diphosphate. Catalyzes the attachment of aspartate to tRNA(Asp) in the mitochondrion. In Saccharomyces cerevisiae (strain ATCC 204508 / S288c) (Baker's yeast), this protein is Aspartate--tRNA ligase, mitochondrial (MSD1).